Here is a 147-residue protein sequence, read N- to C-terminus: Hemoglobin subunit beta (147 aa).

The residue at position 2 (Val-2) is an N-acetylvaline. Positions 3 to 147 (HLSAEEKGHI…VATALAHKYH (145 aa)) constitute a Globin domain. The residue at position 60 (Lys-60) is an N6-acetyllysine. Position 64 (His-64) interacts with heme b. Lys-83 bears the N6-acetyllysine mark. A heme b-binding site is contributed by His-93. S-nitrosocysteine is present on Cys-94. Lys-145 carries the N6-acetyllysine modification.

The protein belongs to the globin family. Heterotetramer of two alpha chains and two beta chains. In terms of tissue distribution, red blood cells.

Involved in oxygen transport from the lung to the various peripheral tissues. The sequence is that of Hemoglobin subunit beta (HBB) from Sminthopsis crassicaudata (Fat-tailed dunnart).